Here is a 336-residue protein sequence, read N- to C-terminus: tRNA dimethylallyltransferase (336 aa).

19–26 (GPTASGKT) is a binding site for ATP. 21 to 26 (TASGKT) is a substrate binding site.

Belongs to the IPP transferase family. As to quaternary structure, monomer. The cofactor is Mg(2+).

It carries out the reaction adenosine(37) in tRNA + dimethylallyl diphosphate = N(6)-dimethylallyladenosine(37) in tRNA + diphosphate. Catalyzes the transfer of a dimethylallyl group onto the adenine at position 37 in tRNAs that read codons beginning with uridine, leading to the formation of N6-(dimethylallyl)adenosine (i(6)A). The protein is tRNA dimethylallyltransferase of Bifidobacterium adolescentis (strain ATCC 15703 / DSM 20083 / NCTC 11814 / E194a).